Reading from the N-terminus, the 258-residue chain is Beta carbonic anhydrase 3 (258 aa).

Residues 1-28 (MSTESYEDAIKRLGELLSKKSDLGNVAA) form the signal peptide. A coiled-coil region spans residues 24 to 54 (GNVAAAKIKKLTDELEELDSNKLDAVERIKS). Residue threonine 35 is modified to Phosphothreonine. Residue serine 95 is modified to Phosphoserine. Residue cysteine 201 is modified to S-nitrosocysteine.

It belongs to the beta-class carbonic anhydrase family. As to expression, strongly expressed in aerial tissues including leaves, stems, flowers and siliques, and, to a lower extent, in roots.

It localises to the cytoplasm. Its subcellular location is the cytosol. It catalyses the reaction hydrogencarbonate + H(+) = CO2 + H2O. Functionally, reversible hydration of carbon dioxide. The polypeptide is Beta carbonic anhydrase 3 (BCA3) (Arabidopsis thaliana (Mouse-ear cress)).